Here is a 254-residue protein sequence, read N- to C-terminus: uncharacterized protein (254 aa).

NADP(+) contacts are provided by V7 and N85. S136 functions as the Proton donor in the catalytic mechanism. NADP(+) contacts are provided by Y150, K154, V181, and T183. Y150 functions as the Proton acceptor in the catalytic mechanism. K154 serves as the catalytic Lowers pKa of active site Tyr.

It belongs to the short-chain dehydrogenases/reductases (SDR) family.

This is an uncharacterized protein from Saccharomyces cerevisiae (strain ATCC 204508 / S288c) (Baker's yeast).